The chain runs to 861 residues: Probable beta-glucosidase A (861 aa).

Residues 1–19 (MKLGWIEVAALAAASVVSA) form the signal peptide. N-linked (GlcNAc...) asparagine glycosylation is found at N62, N212, and N253. The active site involves D281. N316, N323, N355, N443, N524, N543, N565, N669, and N713 each carry an N-linked (GlcNAc...) asparagine glycan. The segment at 730–754 (DSKYIPEGATDGSAQPRLPASGGAG) is disordered. Residue N846 is glycosylated (N-linked (GlcNAc...) asparagine).

Belongs to the glycosyl hydrolase 3 family.

It is found in the secreted. The catalysed reaction is Hydrolysis of terminal, non-reducing beta-D-glucosyl residues with release of beta-D-glucose.. Its pathway is glycan metabolism; cellulose degradation. Functionally, beta-glucosidases are one of a number of cellulolytic enzymes involved in the degradation of cellulosic biomass. Catalyzes the last step releasing glucose from the inhibitory cellobiose. This is Probable beta-glucosidase A (bglA) from Aspergillus oryzae (strain ATCC 42149 / RIB 40) (Yellow koji mold).